A 145-amino-acid chain; its full sequence is MILWRISAYADLSGTGGLRVSGRWHQAGRPVVYAATSPPGAMLEVLVHLEIDPEDFPTTMRLLRIELPDTVSQAQLPALQPGWSAQPELTRTLGNRFLDDCSALLLPVPSAIMPSTTNYLFNPRHPQAQSAKIQVEDFTPDSRLF.

It belongs to the MbcT/ParT/Res family. As to quaternary structure, homodimer. Forms a complex with cognate antitoxin Xre; the 2 toxin molecules dimerize and each contacts an Xre homodimer. Most Res-Xre contacts are between the antitoxin molecule closest to the toxin.

Toxic component of a type II toxin-antitoxin (TA) system. Expression in E.coli inhibits cell growth. In vivo it is probably neutralized by cognate antitoxin Xre; this has not been shown upon expression in E.coli. Probably depletes intracellular NAD(+). The sequence is that of Toxin Res from Pseudomonas putida (strain ATCC 47054 / DSM 6125 / CFBP 8728 / NCIMB 11950 / KT2440).